The chain runs to 107 residues: MLTQQLLSIGVNHFLTISVILFGLGMFAVMTRKNAIVILMGVELILNAANINFLTFSKYNGGMEGVMFSLFVIVLAAAEAAIALAIVINIFKTFKTVDVSSVDTMKE.

The next 3 helical transmembrane spans lie at 9-29 (IGVN…MFAV), 36-56 (IVIL…FLTF), and 68-88 (FSLF…AIVI).

The protein belongs to the complex I subunit 4L family. NDH-1 is composed of 14 different subunits. Subunits NuoA, H, J, K, L, M, N constitute the membrane sector of the complex.

The protein localises to the cell inner membrane. The catalysed reaction is a quinone + NADH + 5 H(+)(in) = a quinol + NAD(+) + 4 H(+)(out). In terms of biological role, NDH-1 shuttles electrons from NADH, via FMN and iron-sulfur (Fe-S) centers, to quinones in the respiratory chain. The immediate electron acceptor for the enzyme in this species is believed to be a menaquinone. Couples the redox reaction to proton translocation (for every two electrons transferred, four hydrogen ions are translocated across the cytoplasmic membrane), and thus conserves the redox energy in a proton gradient. In Chlorobaculum tepidum (strain ATCC 49652 / DSM 12025 / NBRC 103806 / TLS) (Chlorobium tepidum), this protein is NADH-quinone oxidoreductase subunit K.